A 132-amino-acid polypeptide reads, in one-letter code: ATP synthase epsilon chain (132 aa).

It belongs to the ATPase epsilon chain family. In terms of assembly, F-type ATPases have 2 components, CF(1) - the catalytic core - and CF(0) - the membrane proton channel. CF(1) has five subunits: alpha(3), beta(3), gamma(1), delta(1), epsilon(1). CF(0) has three main subunits: a, b and c.

Its subcellular location is the cell membrane. Produces ATP from ADP in the presence of a proton gradient across the membrane. This is ATP synthase epsilon chain (atpC) from Bacillus caldotenax.